The following is a 687-amino-acid chain: Acetolactate synthase catalytic subunit, mitochondrial (687 aa).

A mitochondrion-targeting transit peptide spans 1 to 90 (MIRQSTLKNF…AEPDMDTSFV (90 aa)). The span at 43 to 52 (YYSASPLPAS) shows a compositional bias: low complexity. The segment at 43–68 (YYSASPLPASKRPEPAPSFNVDPLEQ) is disordered. Glutamate 139 provides a ligand contact to thiamine diphosphate. Residues arginine 241, 355–376 (HGCATANLAVQNADLIIAVGAR), and 407–426 (EVSPKNINKVVQTQIAVEGD) contribute to the FAD site. Residues 499-579 (QHQMWAAQHW…VKILILNNEE (81 aa)) form a thiamine pyrophosphate binding region. 3 residues coordinate Mg(2+): aspartate 550, asparagine 577, and glutamate 579.

It belongs to the TPP enzyme family. As to quaternary structure, homodimer. The acetolactate synthase complex contains the catalytic subunit ILV2 and the regulatory small subunit ILV6. Mg(2+) serves as cofactor. Requires thiamine diphosphate as cofactor.

Its subcellular location is the mitochondrion. The catalysed reaction is 2 pyruvate + H(+) = (2S)-2-acetolactate + CO2. It carries out the reaction 2-oxobutanoate + pyruvate + H(+) = (S)-2-ethyl-2-hydroxy-3-oxobutanoate + CO2. The protein operates within amino-acid biosynthesis; L-isoleucine biosynthesis; L-isoleucine from 2-oxobutanoate: step 1/4. It functions in the pathway amino-acid biosynthesis; L-valine biosynthesis; L-valine from pyruvate: step 1/4. Its activity is regulated as follows. The regulatory subunit ILV6 stimulates enzymatic activity seven- to tenfold and confers sensitivity to inhibition by valine and activation by ATP. Functionally, catalytic subunit of mitochondrial acetolactate synthase, which catalyzes the first of a series of common steps in the biosynthesis of the branched-chain amino acids. Catalyzes the irreversible decarboxylation of pyruvate to a bound hydroxyethyl group that then condenses with either a second pyruvate molecule to form 2-acetolactate (AL) or with 2-ketobutyrate to form 2-aceto-2-hydroxybutyrate (AHB). The first product is the precursor for valine and leucine biosynthesis, while the second leads to isoleucine. This is Acetolactate synthase catalytic subunit, mitochondrial (ILV2) from Saccharomyces cerevisiae (strain ATCC 204508 / S288c) (Baker's yeast).